The chain runs to 291 residues: uncharacterized protein (291 aa).

Residues 1 to 82 (MEAEKETEQE…SYSSSPFETH (82 aa)) are disordered. 2 stretches are compositionally biased toward low complexity: residues 28–43 (HSHSMSSPIHSSISAS) and 59–78 (STSSSSSSSSSPLTSYSSSP).

This is an uncharacterized protein from Arabidopsis thaliana (Mouse-ear cress).